Here is a 376-residue protein sequence, read N- to C-terminus: Probable low-specificity L-threonine aldolase (376 aa).

Residues 1–21 (MSGSVTSTTTETRLCPSNQGS) are compositionally biased toward polar residues. The disordered stretch occupies residues 1–22 (MSGSVTSTTTETRLCPSNQGSA). K226 is subject to N6-(pyridoxal phosphate)lysine.

The protein belongs to the threonine aldolase family. In terms of assembly, homotetramer. It depends on pyridoxal 5'-phosphate as a cofactor.

The enzyme catalyses L-threonine = acetaldehyde + glycine. The catalysed reaction is L-allo-threonine = acetaldehyde + glycine. It participates in amino-acid degradation; L-threonine degradation via aldolase pathway; acetaldehyde and glycine from L-threonine: step 1/1. The chain is Probable low-specificity L-threonine aldolase (gly1) from Schizosaccharomyces pombe (strain 972 / ATCC 24843) (Fission yeast).